The chain runs to 409 residues: tRNA(Met) cytidine acetate ligase (409 aa).

ATP is bound by residues 7–20, G102, N169, and R194; that span reads VVEY…HLYH.

Belongs to the TmcAL family.

It localises to the cytoplasm. It carries out the reaction cytidine(34) in elongator tRNA(Met) + acetate + ATP = N(4)-acetylcytidine(34) in elongator tRNA(Met) + AMP + diphosphate. Functionally, catalyzes the formation of N(4)-acetylcytidine (ac(4)C) at the wobble position of elongator tRNA(Met), using acetate and ATP as substrates. First activates an acetate ion to form acetyladenylate (Ac-AMP) and then transfers the acetyl group to tRNA to form ac(4)C34. The chain is tRNA(Met) cytidine acetate ligase from Clostridium botulinum (strain Kyoto / Type A2).